Reading from the N-terminus, the 65-residue chain is Pancreatic polypeptide prohormone (65 aa).

Residue Tyr36 is modified to Tyrosine amide. A propeptide spanning residues 59–65 (ELSPMGA) is cleaved from the precursor.

It belongs to the NPY family.

The protein resides in the secreted. In terms of biological role, hormone secreted by pancreatic cells that acts as a regulator of pancreatic and gastrointestinal functions probably by signaling through the G protein-coupled receptor NPY4R2. The chain is Pancreatic polypeptide prohormone (PPY) from Sus scrofa (Pig).